Here is a 553-residue protein sequence, read N- to C-terminus: Transcription factor GAMYB (553 aa).

The span at 1 to 17 (MYRVKSESDCEMIHQEQ) shows a compositional bias: basic and acidic residues. Residues 1–45 (MYRVKSESDCEMIHQEQMDSPVADDGSSGGSPHRGGGPPLKKGPW) form a disordered region. The segment covering 27–38 (SSGGSPHRGGGP) has biased composition (gly residues). HTH myb-type domains follow at residues 37-89 (GPPL…ANHL) and 90-144 (RPNL…KRCQ). 2 DNA-binding regions (H-T-H motif) span residues 65-89 (WNAVQKNTGLFRCGKSCRLRWANHL) and 117-140 (WARMAAHLPGRTDNEIKNYWNTRI). The disordered stretch occupies residues 464 to 488 (PAQSTSMGSGEQVMGPKYEPGDTSP).

Its subcellular location is the nucleus. Its function is as follows. Transcriptional activator of gibberellin-dependent alpha-amylase expression in aleurone cells. Involved in pollen and floral organs development. May bind to the 5'-TAACAAA-3' box of alpha-amylase promoter. The protein is Transcription factor GAMYB (GAM1) of Oryza sativa subsp. indica (Rice).